The primary structure comprises 238 residues: 14-3-3 family protein artA (238 aa).

This sequence belongs to the 14-3-3 family.

14-3-3 family protein that plays a role in the morphological differentiation and secondary metabolism biosynthesis. Required for normal fungal morphogenesis in an environment-dependent manner, affecting the balance between production of conidiophores and the formation of sclerotia, resistant structures that are necessary for the dissemination and survival. Acts as a positive regulator of conidiation and a negative regulator of sclerotial production. Also regulates the production of secondary metabolites such as aflatoxin, but also the indole-tetramic acid mycotoxin cyclopiazonic acid (CPA) and ustiloxin, an inhibitor of microtubule assembly. This is 14-3-3 family protein artA from Aspergillus flavus (strain ATCC 200026 / FGSC A1120 / IAM 13836 / NRRL 3357 / JCM 12722 / SRRC 167).